The primary structure comprises 218 residues: Cytochrome b6 (218 aa).

The chain crosses the membrane as a helical span at residues 35–55; sequence IFYCLGGITLVCFLIQFATGF. Cys38 contributes to the heme c binding site. Heme b is bound by residues His89 and His103. A run of 3 helical transmembrane segments spans residues 93–113, 119–139, and 189–209; these read ASMMVLMLILHVFRVYLTGGF, LTWVTGVTMAVITVSFGVTGY, and LHTFVMPWLLAVFMLMHFLMI. Positions 190 and 205 each coordinate heme b.

It belongs to the cytochrome b family. PetB subfamily. The 4 large subunits of the cytochrome b6-f complex are cytochrome b6, subunit IV (17 kDa polypeptide, PetD), cytochrome f and the Rieske protein, while the 4 small subunits are PetG, PetL, PetM and PetN. The complex functions as a dimer. The cofactor is heme b. Heme c is required as a cofactor.

It localises to the cellular thylakoid membrane. In terms of biological role, component of the cytochrome b6-f complex, which mediates electron transfer between photosystem II (PSII) and photosystem I (PSI), cyclic electron flow around PSI, and state transitions. This Synechococcus sp. (strain CC9311) protein is Cytochrome b6.